A 418-amino-acid polypeptide reads, in one-letter code: uncharacterized protein (418 aa).

A disordered region spans residues 1–24 (MSGTAGFITVSPGPPTEAPGGFPR).

It to A.pernix APE_1276 and S.solfataricus SSO2105.

This is an uncharacterized protein from Aeropyrum pernix (strain ATCC 700893 / DSM 11879 / JCM 9820 / NBRC 100138 / K1).